Reading from the N-terminus, the 200-residue chain is Matrix protein (200 aa).

Homomultimer. Interacts with viral nucleocapsid.

Its subcellular location is the virion membrane. The protein localises to the host endomembrane system. The protein resides in the host nucleus membrane. In terms of biological role, plays a major role in assembly and budding of virion, by recruiting cellular partners of the ESCRT complexes that play a key role in releasing the budding particle from the host membrane. Condensates the ribonucleocapsid core during virus assembly. This chain is Matrix protein (M), found in Tupaia (TUPV).